A 478-amino-acid polypeptide reads, in one-letter code: Glycogen synthase (478 aa).

ADP-alpha-D-glucose is bound at residue K15.

This sequence belongs to the glycosyltransferase 1 family. Bacterial/plant glycogen synthase subfamily.

The enzyme catalyses [(1-&gt;4)-alpha-D-glucosyl](n) + ADP-alpha-D-glucose = [(1-&gt;4)-alpha-D-glucosyl](n+1) + ADP + H(+). It participates in glycan biosynthesis; glycogen biosynthesis. Synthesizes alpha-1,4-glucan chains using ADP-glucose. This Clostridium botulinum (strain Alaska E43 / Type E3) protein is Glycogen synthase.